The chain runs to 118 residues: NADH-ubiquinone oxidoreductase chain 3 (118 aa).

3 helical membrane-spanning segments follow: residues 7–27, 62–82, and 87–107; these read IFIY…LPFL, LVSI…PWAV, and IDLF…IGFL.

This sequence belongs to the complex I subunit 3 family.

The protein resides in the mitochondrion membrane. It carries out the reaction a ubiquinone + NADH + 5 H(+)(in) = a ubiquinol + NAD(+) + 4 H(+)(out). In terms of biological role, core subunit of the mitochondrial membrane respiratory chain NADH dehydrogenase (Complex I) that is believed to belong to the minimal assembly required for catalysis. Complex I functions in the transfer of electrons from NADH to the respiratory chain. The immediate electron acceptor for the enzyme is believed to be ubiquinone. The polypeptide is NADH-ubiquinone oxidoreductase chain 3 (ND3) (Allium cepa (Onion)).